The following is a 268-amino-acid chain: ClpXP adapter protein SpxH (268 aa).

It belongs to the SpxH family. In terms of assembly, interacts with Spx.

It localises to the cytoplasm. Its function is as follows. Adapter protein required for efficient degradation of Spx by ClpXP under non-stress conditions. Interaction with Spx stabilizes Spx and exposes the C-terminus of Spx for recognition and proteolysis by ClpXP. This chain is ClpXP adapter protein SpxH, found in Staphylococcus aureus (strain Mu3 / ATCC 700698).